A 329-amino-acid polypeptide reads, in one-letter code: MTHLQAGLSPETLEKAKVELKENPDTLHQDIQEVRDMIITRPDIGFLRTDDAFILRFLRARKFNHFEAFRLLAQYFEYRQQNLDMFKNLKATDPGIKQALKDGFPGVLSNLDRYGRKILVLFAANWDQSRYTFVDILRAILLSLEAMIEDPELQVNGFVLIIDWSNFTFKQASKLTPSMLRLAIEGLQDSFPARFGGIHFVNQPWYIHALYTVIRPFLKDKTRKRIFMHGNNLNSLHQLILPEILPSELGGMLPPYDMGTWARTLLDHAYDEETDYCPESYTLSVKDLEKDLSPKTMKRSQSVVEPGVLKRPEKVKSEEENMQPLLSLD.

The CRAL-TRIO domain occupies isoleucine 96 to aspartate 257. Positions serine 293–aspartate 329 are disordered. Basic and acidic residues predominate over residues valine 308–glutamate 319.

The protein resides in the golgi apparatus. It is found in the trans-Golgi network membrane. It localises to the early endosome membrane. Its subcellular location is the cytoplasmic vesicle. The protein localises to the clathrin-coated vesicle. Its function is as follows. Required for normal morphology of late endosomes and/or lysosomes in neurons. Binds phosphatidylinositol 3,5-bisphosphate (PtdIns(3,5)P2). This Danio rerio (Zebrafish) protein is Clavesin-2 (clvs2).